The following is a 381-amino-acid chain: MKKVVILGSTGSIGKNALEVIRKFPDKFKVLGLAAKSSVNILEEQIKEFNPQYVAVFDKKACDELRKKVKNLEILKGNEGICKLAKLKEADIILSAIVGAAGLIPTFEAVKEGKTIGVANKESFVMAGELIKKQGKISGAKIIPVDSEHSAVFQCINGCNKPYIKKIWLTASGGPFRGKKSYEIENVTPQEALNHPKWKMGKRITIDSATLMNKGFEVIEAHYLFDMPAENIGVLIHPQSIIHCLVEFIDGTYLAQMSNPDMKAPIALALSFPERLPEIVPPIDWSITTKLQFEIPDTEVFPCLKLAYEALNAGGSMPAVLNAADEVAVEAFLSGRLKFKEIYKIIKKVMDAHKIVSVSSIEEVLEADSWARKMAKKEIGE.

NADPH is bound by residues threonine 10, glycine 11, serine 12, isoleucine 13, and asparagine 120. Lysine 121 lines the 1-deoxy-D-xylulose 5-phosphate pocket. Glutamate 122 serves as a coordination point for NADPH. A Mn(2+)-binding site is contributed by aspartate 146. 1-deoxy-D-xylulose 5-phosphate-binding residues include serine 147, glutamate 148, serine 172, and histidine 195. Glutamate 148 lines the Mn(2+) pocket. Glycine 201 is an NADPH binding site. Serine 208, asparagine 213, lysine 214, and glutamate 217 together coordinate 1-deoxy-D-xylulose 5-phosphate. Glutamate 217 is a Mn(2+) binding site.

It belongs to the DXR family. It depends on Mg(2+) as a cofactor. Requires Mn(2+) as cofactor.

It carries out the reaction 2-C-methyl-D-erythritol 4-phosphate + NADP(+) = 1-deoxy-D-xylulose 5-phosphate + NADPH + H(+). It participates in isoprenoid biosynthesis; isopentenyl diphosphate biosynthesis via DXP pathway; isopentenyl diphosphate from 1-deoxy-D-xylulose 5-phosphate: step 1/6. In terms of biological role, catalyzes the NADPH-dependent rearrangement and reduction of 1-deoxy-D-xylulose-5-phosphate (DXP) to 2-C-methyl-D-erythritol 4-phosphate (MEP). The chain is 1-deoxy-D-xylulose 5-phosphate reductoisomerase from Thermodesulfovibrio yellowstonii (strain ATCC 51303 / DSM 11347 / YP87).